A 316-amino-acid polypeptide reads, in one-letter code: Beta-galactosidase small subunit (316 aa).

This sequence belongs to the bacterial beta-galactosidase small subunit family. As to quaternary structure, heterodimer of a large (LacL) and a small subunit (LacM).

It catalyses the reaction Hydrolysis of terminal non-reducing beta-D-galactose residues in beta-D-galactosides.. Functionally, component of a beta-galactosidase. This chain is Beta-galactosidase small subunit (lacM), found in Lactobacillus acidophilus (strain ATCC 700396 / NCK56 / N2 / NCFM).